The following is a 266-amino-acid chain: Type 1 encapsulin shell protein (266 aa).

The protein belongs to the encapsulin family. Family 1 subfamily. As to quaternary structure, this encapsulin nanocompartment is formed by 60 subunits; monomers form 12 pentamers which assemble to form shells. Shells are loaded with 4 encapsulated ferritin-like protein decamers (EncFtn) in a tetrahedral arrangement. A 3 nm gap is consistently seen between the shell and the cargo.

The protein resides in the encapsulin nanocompartment. In terms of biological role, shell component of a type 1 encapsulin nanocompartment. Assembles into proteinaceous shells about 21 nm in diameter. Small pores form at, or close to, the 2-, 3-, and 5-fold symmetry axes. Data analysis suggests the 5-fold pores open and close with maximal and minimal aperatures of 15 and 5 Angstroms. Cargo protein Fer (ferritin-like protein, probably stores iron) is targeted to the interior via its C-terminal extension; empty intact shells can be isolated in the absence of cargo protein. The sequence is that of Type 1 encapsulin shell protein from Haliangium ochraceum (strain DSM 14365 / JCM 11303 / SMP-2).